Reading from the N-terminus, the 205-residue chain is Ribosomal RNA small subunit methyltransferase G (205 aa).

S-adenosyl-L-methionine is bound by residues G66, F71, 119–120 (IE), and R135.

This sequence belongs to the methyltransferase superfamily. RNA methyltransferase RsmG family.

It is found in the cytoplasm. It carries out the reaction guanosine(527) in 16S rRNA + S-adenosyl-L-methionine = N(7)-methylguanosine(527) in 16S rRNA + S-adenosyl-L-homocysteine. Functionally, specifically methylates the N7 position of guanine in position 527 of 16S rRNA. This Rhizobium etli (strain ATCC 51251 / DSM 11541 / JCM 21823 / NBRC 15573 / CFN 42) protein is Ribosomal RNA small subunit methyltransferase G.